The primary structure comprises 714 residues: BRCA1-associated RING domain protein 1 (714 aa).

The segment at 25-63 (CPLCLKLLNRPVLLPCDHVFCDSCVHKSSQVESGCPVCK) adopts an RING-type zinc-finger fold. Disordered regions lie at residues 106 to 165 (YKND…QDWT) and 254 to 283 (KAQN…DAME). Residues 118 to 134 (KHGESEDSEMTDKDVSK) are compositionally biased toward basic and acidic residues. The span at 135-147 (RSGGTDSSSRDGS) shows a compositional bias: low complexity. 2 stretches are compositionally biased toward basic and acidic residues: residues 155 to 165 (SDPRPKHQDWT) and 264 to 283 (SHTE…DAME). A C2HC pre-PHD-type zinc finger spans residues 331–382 (ITICGFCQSARVSEATGEMLHYSRGRPVDGDDIFRSNVIHVHSACIEWAPQV). Residues 402-451 (IKCTKCSLKGAALGCFVKSCRRSYHVPCAREISRCRWDYEDFLLLCPAHS) form a PHD-type zinc finger. BRCT domains lie at 482-577 (EQTP…PFEI) and 598-713 (NKPK…HPVI).

Component of a DNA-protein complex on WUS and WOX5 promoters. Interacts with SYD. Forms heterodimer with BRCA1. Expressed in the shoot apical meristem (SAM), roots, flowers, embryos and seedlings. Mostly expressed in flowers and siliques, and, to a lower extent, in roots, rosette leaves, inflorescence and young cauline leaves.

It localises to the nucleus. In terms of biological role, binds specifically to H3K4me3 regions of target genes (e.g. WUS and WOX5) promoters to repress their transcription via chromatin remodeling. Required for the shoot apical meristem (SAM) organization and maintenance, by confining WUS expression to the organizing center, and for the quiescent center (QC) development in the root apical meristem (RAM), by repressing WOX5 expression in the root proximal meristem. Plays a role in DNA repair and in cell-cycle control. Required for the repair of DNA double-strand breaks (DSBs), both natural and induced by genotoxic stress, by homologous recombination (HR). This is BRCA1-associated RING domain protein 1 from Arabidopsis thaliana (Mouse-ear cress).